A 197-amino-acid chain; its full sequence is ATP-dependent Clp protease proteolytic subunit (197 aa).

The active-site Nucleophile is Ser-98. The active site involves His-123.

Belongs to the peptidase S14 family. Fourteen ClpP subunits assemble into 2 heptameric rings which stack back to back to give a disk-like structure with a central cavity, resembling the structure of eukaryotic proteasomes.

It localises to the cytoplasm. The enzyme catalyses Hydrolysis of proteins to small peptides in the presence of ATP and magnesium. alpha-casein is the usual test substrate. In the absence of ATP, only oligopeptides shorter than five residues are hydrolyzed (such as succinyl-Leu-Tyr-|-NHMec, and Leu-Tyr-Leu-|-Tyr-Trp, in which cleavage of the -Tyr-|-Leu- and -Tyr-|-Trp bonds also occurs).. Cleaves peptides in various proteins in a process that requires ATP hydrolysis. Has a chymotrypsin-like activity. Plays a major role in the degradation of misfolded proteins. The protein is ATP-dependent Clp protease proteolytic subunit of Limosilactobacillus reuteri (strain DSM 20016) (Lactobacillus reuteri).